The sequence spans 134 residues: Small ribosomal subunit protein bS16 (134 aa).

The segment at 79–134 (AGIAKRPSRNNPTKGEPGKKAQERLALAKQAEEEASAKAAEAAAAAAAPAEEAASE) is disordered. Positions 115 to 134 (AKAAEAAAAAAAPAEEAASE) are enriched in low complexity.

Belongs to the bacterial ribosomal protein bS16 family.

The sequence is that of Small ribosomal subunit protein bS16 from Brucella abortus (strain S19).